A 33-amino-acid polypeptide reads, in one-letter code: Ferredoxin (33 aa).

Residues 3 to 33 (KYKVRLLSEAEGIDVTIDSADDVYILDAAEE) form the 2Fe-2S ferredoxin-type domain.

It belongs to the 2Fe2S plant-type ferredoxin family. The cofactor is [2Fe-2S] cluster.

It is found in the plastid. It localises to the chloroplast. In terms of biological role, ferredoxins are iron-sulfur proteins that transfer electrons in a wide variety of metabolic reactions. The chain is Ferredoxin from Porphyridium aerugineum (Red microalga).